A 361-amino-acid chain; its full sequence is Peptide chain release factor 1 (361 aa).

Position 238 is an N5-methylglutamine (Gln-238).

Belongs to the prokaryotic/mitochondrial release factor family. In terms of processing, methylated by PrmC. Methylation increases the termination efficiency of RF1.

The protein resides in the cytoplasm. Functionally, peptide chain release factor 1 directs the termination of translation in response to the peptide chain termination codons UAG and UAA. In Mesomycoplasma hyopneumoniae (strain J / ATCC 25934 / NCTC 10110) (Mycoplasma hyopneumoniae), this protein is Peptide chain release factor 1.